A 333-amino-acid chain; its full sequence is Glycerol-3-phosphate dehydrogenase [NAD(P)+] (333 aa).

Trp-12, Lys-33, and Lys-105 together coordinate NADPH. Residues Lys-105, Gly-136, and Ser-138 each contribute to the sn-glycerol 3-phosphate site. Ala-140 lines the NADPH pocket. Sn-glycerol 3-phosphate-binding residues include Lys-191, Asp-244, Ser-254, Arg-255, and Asn-256. Lys-191 acts as the Proton acceptor in catalysis. NADPH is bound at residue Arg-255. Residues Val-279 and Glu-281 each coordinate NADPH.

The protein belongs to the NAD-dependent glycerol-3-phosphate dehydrogenase family.

It localises to the cytoplasm. It carries out the reaction sn-glycerol 3-phosphate + NAD(+) = dihydroxyacetone phosphate + NADH + H(+). The catalysed reaction is sn-glycerol 3-phosphate + NADP(+) = dihydroxyacetone phosphate + NADPH + H(+). Its pathway is membrane lipid metabolism; glycerophospholipid metabolism. Functionally, catalyzes the reduction of the glycolytic intermediate dihydroxyacetone phosphate (DHAP) to sn-glycerol 3-phosphate (G3P), the key precursor for phospholipid synthesis. This is Glycerol-3-phosphate dehydrogenase [NAD(P)+] from Protochlamydia amoebophila (strain UWE25).